Consider the following 392-residue polypeptide: MDALVEDDICILNHEKAHKRDTVTPVSIYSGDESVASHFALVTAYEDIKKRLKDSEKENSLLKKRIRFLEEKLIARFDEETSSVGREQVNKAYHAYREVCIDRDNLKSKLDKMNKDNSESLKVLNEQLQSKEVELLQPRTEVETQQVMRNLNPPSSNWEVEKLSCDLKIHGLEQELELMRKECSDLKIELQKAKQTDPYQEDNLKSRDLQKLSISSDNMQHAYWELKREMSNLHLVTQVQAELLRKLKTSTAIKKACAPVGCSEDLGRDSTKLHLMNFTATYTRHPPVSPNGKALCHTASSPLPGDVKVLSEKAILQSWTDNERSIPNDGTCFQEHSSYGRNSLEDNSWVFPSPPKSSETAFGETKTKTLPLPNLPPLHYLDQHNQNCLYKN.

Residues 1–197 form a homodimerization region; the sequence is MDALVEDDIC…IELQKAKQTD (197 aa). 3 coiled-coil regions span residues 40-76, 102-135, and 166-196; these read ALVT…LIAR, DRDN…EVEL, and DLKI…AKQT. Positions 216–257 are interaction with TBK1 and IKBKE; the sequence is SDNMQHAYWELKREMSNLHLVTQVQAELLRKLKTSTAIKKAC. Phosphoserine is present on residues S318 and S353. Residues 345 to 365 form a disordered region; that stretch reads EDNSWVFPSPPKSSETAFGET.

As to quaternary structure, homodimer. Interacts with IKBKE, TBK1 and TICAM1. Interacts with TAX1BP1. Interacts with CALCOCO2. Post-translationally, ubiquitinated via 'Lys-48'-linked polyubiquitination by TRIM38, leading to its degradation.

Its subcellular location is the cytoplasm. Adapter protein which binds TBK1 and IKBKE playing a role in antiviral innate immunity. Activates serine/threonine-protein kinase TBK1 and facilitates its oligomerization. Enhances the phosphorylation of NF-kappa-B p65 subunit RELA by TBK1. Promotes TBK1-induced as well as TNF-alpha or PMA-induced activation of NF-kappa-B. Participates in IFNB promoter activation via TICAM1. In Pongo abelii (Sumatran orangutan), this protein is 5-azacytidine-induced protein 2 (AZI2).